A 357-amino-acid chain; its full sequence is MAERSSEFVFTGNPARVIFGAGRMRNVREEVERLGRGRVLLLGSENLREVCDQVQDLLGELFVNRYDGAAMHTPVEVTDIALAQLRTSEADCVVAIGGGSTTGLAKALAARTGVDQVILPTTYAGSEVTPVLGETVEGRKTTRSTLAVLPETVIYDVELSKNLPVPIAVASAVNALAHAVEAMYSPDANPVVDTWALEAAQALARGLRGLVSDPSCRRIRTDLLRGSWLAGMCLGSVGMAVHHKLCHTLGGAFGLPHAPTHTVVLPYAMSFNASEVPDVMDSLASAMNVSNAPAGVWDLIADAGGPTSLASLGLLQTDLDRAADLATEAPYRNPRQITRSGIRDLLQSAWEGNRPPE.

This sequence belongs to the iron-containing alcohol dehydrogenase family.

It catalyses the reaction 3-oxoadipate + NAD(+) = maleylacetate + NADH + H(+). The catalysed reaction is 3-oxoadipate + NADP(+) = maleylacetate + NADPH + H(+). It participates in aromatic compound metabolism; 3-chlorocatechol degradation. In terms of biological role, plays a major role in the degradation of chloroaromatic compounds by channeling maleylacetate and some of its substituted derivatives into the 3-oxoadipate pathway. This enzyme converts maleylacetate and 2-chloromaleylacetate with similar efficiencies. This is Maleylacetate reductase 1 (macA) from Rhodococcus opacus (Nocardia opaca).